The sequence spans 444 residues: tRNA modification GTPase MnmE (444 aa).

The (6S)-5-formyl-5,6,7,8-tetrahydrofolate site is built by R22, E79, and R118. The region spanning 214–368 (GMQVVLAGPP…LRDHLKSVMG (155 aa)) is the TrmE-type G domain. Position 224 (N224) interacts with K(+). GTP contacts are provided by residues 224–229 (NAGKSS), 243–249 (TEVPGTT), and 268–271 (DTAG). S228 is a Mg(2+) binding site. The K(+) site is built by T243, V245, and T248. Residue T249 participates in Mg(2+) binding. K444 is a (6S)-5-formyl-5,6,7,8-tetrahydrofolate binding site.

This sequence belongs to the TRAFAC class TrmE-Era-EngA-EngB-Septin-like GTPase superfamily. TrmE GTPase family. In terms of assembly, homodimer. Heterotetramer of two MnmE and two MnmG subunits. K(+) is required as a cofactor.

The protein localises to the cytoplasm. Functionally, exhibits a very high intrinsic GTPase hydrolysis rate. Involved in the addition of a carboxymethylaminomethyl (cmnm) group at the wobble position (U34) of certain tRNAs, forming tRNA-cmnm(5)s(2)U34. This Alkalilimnicola ehrlichii (strain ATCC BAA-1101 / DSM 17681 / MLHE-1) protein is tRNA modification GTPase MnmE.